The chain runs to 227 residues: Cytochrome c oxidase subunit 2 (227 aa).

Residues 1–14 (MAHPAQLGFQDAAS) are Mitochondrial intermembrane-facing. The chain crosses the membrane as a helical span at residues 15 to 45 (PIMEELMYFHDHTLMIVFLISSLVLYIISLM). The Mitochondrial matrix segment spans residues 46–59 (LTTELTHTSTMDAQ). Residues 60 to 87 (EVETVWTILPAVILILIALPSLRILYMM) traverse the membrane as a helical segment. At 88–227 (DEITTPSLTL…HFEEWLLSTL (140 aa)) the chain is on the mitochondrial intermembrane side. Cu cation contacts are provided by His-161, Cys-196, Glu-198, Cys-200, His-204, and Met-207. Glu-198 contributes to the Mg(2+) binding site.

It belongs to the cytochrome c oxidase subunit 2 family. In terms of assembly, component of the cytochrome c oxidase (complex IV, CIV), a multisubunit enzyme composed of 14 subunits. The complex is composed of a catalytic core of 3 subunits MT-CO1, MT-CO2 and MT-CO3, encoded in the mitochondrial DNA, and 11 supernumerary subunits COX4I, COX5A, COX5B, COX6A, COX6B, COX6C, COX7A, COX7B, COX7C, COX8 and NDUFA4, which are encoded in the nuclear genome. The complex exists as a monomer or a dimer and forms supercomplexes (SCs) in the inner mitochondrial membrane with NADH-ubiquinone oxidoreductase (complex I, CI) and ubiquinol-cytochrome c oxidoreductase (cytochrome b-c1 complex, complex III, CIII), resulting in different assemblies (supercomplex SCI(1)III(2)IV(1) and megacomplex MCI(2)III(2)IV(2)). Found in a complex with TMEM177, COA6, COX18, COX20, SCO1 and SCO2. Interacts with TMEM177 in a COX20-dependent manner. Interacts with COX20. Interacts with COX16. It depends on Cu cation as a cofactor.

The protein resides in the mitochondrion inner membrane. The enzyme catalyses 4 Fe(II)-[cytochrome c] + O2 + 8 H(+)(in) = 4 Fe(III)-[cytochrome c] + 2 H2O + 4 H(+)(out). Component of the cytochrome c oxidase, the last enzyme in the mitochondrial electron transport chain which drives oxidative phosphorylation. The respiratory chain contains 3 multisubunit complexes succinate dehydrogenase (complex II, CII), ubiquinol-cytochrome c oxidoreductase (cytochrome b-c1 complex, complex III, CIII) and cytochrome c oxidase (complex IV, CIV), that cooperate to transfer electrons derived from NADH and succinate to molecular oxygen, creating an electrochemical gradient over the inner membrane that drives transmembrane transport and the ATP synthase. Cytochrome c oxidase is the component of the respiratory chain that catalyzes the reduction of oxygen to water. Electrons originating from reduced cytochrome c in the intermembrane space (IMS) are transferred via the dinuclear copper A center (CU(A)) of subunit 2 and heme A of subunit 1 to the active site in subunit 1, a binuclear center (BNC) formed by heme A3 and copper B (CU(B)). The BNC reduces molecular oxygen to 2 water molecules using 4 electrons from cytochrome c in the IMS and 4 protons from the mitochondrial matrix. The chain is Cytochrome c oxidase subunit 2 (MT-CO2) from Microcebus tavaratra (Northern rufous mouse lemur).